The primary structure comprises 381 residues: Mannitol-1-phosphate 5-dehydrogenase (381 aa).

3–14 (AVHFGAGNIGRG) is a binding site for NAD(+).

Belongs to the mannitol dehydrogenase family.

It catalyses the reaction D-mannitol 1-phosphate + NAD(+) = beta-D-fructose 6-phosphate + NADH + H(+). This chain is Mannitol-1-phosphate 5-dehydrogenase, found in Exiguobacterium sibiricum (strain DSM 17290 / CCUG 55495 / CIP 109462 / JCM 13490 / 255-15).